We begin with the raw amino-acid sequence, 1430 residues long: ABC transporter eupT (1430 aa).

The disordered stretch occupies residues 1–26; sequence MAPAIDSTVNDLQPNTPNPEKALSSQ. The ABC transporter 1 domain occupies 112–368; it reads LALPAMIRQL…FVNLGFECPA (257 aa). The N-linked (GlcNAc...) asparagine glycan is linked to Asn-292. 5 consecutive transmembrane segments (helical) span residues 476 to 496, 511 to 531, 557 to 577, 586 to 606, and 620 to 640; these read WPAV…SSLF, VVLF…VMTL, VLVD…VFYF, GNFF…SGVF, and MVPA…VVPV. The N-linked (GlcNAc...) asparagine glycan is linked to Asn-684. The chain crosses the membrane as a helical span at residues 707–727; the sequence is VGIIIAMVIFNYLMYFIASEY. Residues 789–1032 enclose the ABC transporter 2 domain; it reads FHWNNVCYDL…TLIDYFERNG (244 aa). 825-832 is a binding site for ATP; that stretch reads GVSGAGKT. A glycan (N-linked (GlcNAc...) asparagine) is linked at Asn-1019. 6 helical membrane-spanning segments follow: residues 1133 to 1153, 1213 to 1233, 1249 to 1269, 1278 to 1298, 1305 to 1325, and 1400 to 1420; these read ITLC…APLS, LPWS…PIGF, LMWL…HMCI, GGNI…VLAS, FWIF…VLST, and FGIL…LYWI.

Belongs to the ABC transporter superfamily. ABCG family. PDR (TC 3.A.1.205) subfamily.

The protein resides in the cell membrane. Functionally, ABC transporter; part of the gene cluster that mediates the biosynthesis of eupenifeldin, a bistropolone meroterpenoid that acts as an antitumor agent. The chain is ABC transporter eupT from Phoma sp.